Here is a 584-residue protein sequence, read N- to C-terminus: Probable pectinesterase/pectinesterase inhibitor (584 aa).

Residues 1-22 (MAVGKIVISVASMLLVVGVAIG) form the signal peptide. A pectinesterase inhibitor region spans residues 40-191 (NSHQKAVESL…KILSSNAIDI (152 aa)). N91 and N105 each carry an N-linked (GlcNAc...) asparagine glycan. Residues 246 to 267 (AQAGRPGAPADEGIGEGGGGGG) form a disordered region. The pectinesterase stretch occupies residues 272-571 (THVVAKDGSG…TVANWLTPAN (300 aa)). T349 and Q379 together coordinate substrate. D402 serves as the catalytic Proton donor; for pectinesterase activity. Catalysis depends on D423, which acts as the Nucleophile; for pectinesterase activity. Residues R492 and W494 each contribute to the substrate site.

This sequence in the N-terminal section; belongs to the PMEI family. In the C-terminal section; belongs to the pectinesterase family. In terms of tissue distribution, pollen, and at much lower levels in pistils and petals.

The protein localises to the secreted. The protein resides in the cell wall. It catalyses the reaction [(1-&gt;4)-alpha-D-galacturonosyl methyl ester](n) + n H2O = [(1-&gt;4)-alpha-D-galacturonosyl](n) + n methanol + n H(+). It functions in the pathway glycan metabolism; pectin degradation; 2-dehydro-3-deoxy-D-gluconate from pectin: step 1/5. In terms of biological role, acts in the modification of cell walls via demethylesterification of cell wall pectin. The polypeptide is Probable pectinesterase/pectinesterase inhibitor (BP19) (Brassica napus (Rape)).